We begin with the raw amino-acid sequence, 291 residues long: Pyridoxal 5'-phosphate synthase subunit PdxS (291 aa).

Position 23 (aspartate 23) interacts with D-ribose 5-phosphate. Lysine 80 serves as the catalytic Schiff-base intermediate with D-ribose 5-phosphate. Glycine 152 is a D-ribose 5-phosphate binding site. Residue arginine 164 participates in D-glyceraldehyde 3-phosphate binding. Residues glycine 213 and glycine 234–serine 235 each bind D-ribose 5-phosphate.

The protein belongs to the PdxS/SNZ family. As to quaternary structure, in the presence of PdxT, forms a dodecamer of heterodimers.

The catalysed reaction is aldehydo-D-ribose 5-phosphate + D-glyceraldehyde 3-phosphate + L-glutamine = pyridoxal 5'-phosphate + L-glutamate + phosphate + 3 H2O + H(+). Its pathway is cofactor biosynthesis; pyridoxal 5'-phosphate biosynthesis. Its function is as follows. Catalyzes the formation of pyridoxal 5'-phosphate from ribose 5-phosphate (RBP), glyceraldehyde 3-phosphate (G3P) and ammonia. The ammonia is provided by the PdxT subunit. Can also use ribulose 5-phosphate and dihydroxyacetone phosphate as substrates, resulting from enzyme-catalyzed isomerization of RBP and G3P, respectively. The polypeptide is Pyridoxal 5'-phosphate synthase subunit PdxS (Bifidobacterium longum (strain NCC 2705)).